The sequence spans 3707 residues: CUB and sushi domain-containing protein 3 (3707 aa).

Basic and acidic residues predominate over residues 1-21 (MKGSRKGESRAKESKPREPGT). The segment at 1–22 (MKGSRKGESRAKESKPREPGTR) is disordered. The Cytoplasmic portion of the chain corresponds to 1-42 (MKGSRKGESRAKESKPREPGTRRCAKCGRLDFILKKKMGIKS). A helical membrane pass occupies residues 43–63 (GFTFWNLVFLLTLSCVKGFIY). Topologically, residues 64-3630 (TCGGTLKGLN…NQPHGTNSSS (3567 aa)) are extracellular. Intrachain disulfides connect cysteine 65–cysteine 91, cysteine 178–cysteine 218, cysteine 204–cysteine 235, and cysteine 241–cysteine 267. Residues 65-173 (CGGTLKGLNG…HGFKVYYEEL (109 aa)) form the CUB 1 domain. N-linked (GlcNAc...) asparagine glycosylation is found at asparagine 73 and asparagine 90. The Sushi 1 domain occupies 176–237 (SSCGNPGVPP…WDFPVPICRA (62 aa)). The CUB 2 domain occupies 241-345 (CGGTMRGSSG…RGFSAPYQGS (105 aa)). Positions 388–437 (HRLSEEQRVQVRSLSDSGLDPNTPEDQLSPHQADTQSTSRRPRNAEQIER) are disordered. Positions 411–426 (PEDQLSPHQADTQSTS) are enriched in polar residues. Residues 484–545 (NLCPDPGEPE…WSDHRPVCKV (62 aa)) form the Sushi 2 domain. 6 disulfides stabilise this stretch: cysteine 486/cysteine 526, cysteine 512/cysteine 543, cysteine 548/cysteine 574, cysteine 664/cysteine 704, cysteine 690/cysteine 717, and cysteine 721/cysteine 747. The 112-residue stretch at 548 to 659 (CGSNLQGPSG…VGFKVNYKEI (112 aa)) folds into the CUB 3 domain. Residues 662 to 719 (ESCGDPGTPLYGIREGDGFSNRDVLRFECQFGFELIGEKSIVCQENNQWSANIPICIF) enclose the Sushi 3 domain. The CUB 4 domain maps to 721–829 (CLSNFTAPMG…RGFNITYNTF (109 aa)). Residues asparagine 724 and asparagine 823 are each glycosylated (N-linked (GlcNAc...) asparagine). Positions 832–893 (NECPDPGIPI…WSGPIPRCGA (62 aa)) constitute a Sushi 4 domain. 3 disulfide bridges follow: cysteine 834-cysteine 875, cysteine 860-cysteine 891, and cysteine 895-cysteine 921. A CUB 5 domain is found at 895–1003 (CGGHFSAPSG…NGFKIHYESV (109 aa)). N-linked (GlcNAc...) asparagine glycosylation occurs at asparagine 966. The region spanning 1008–1065 (YSCLDPGIPVHGRRYGHDFSIGSTVSFSCDPGYRLSHEEPLLCEKNHWWSHPLPTCDA) is the Sushi 5 domain. Disulfide bonds link cysteine 1010–cysteine 1050, cysteine 1036–cysteine 1063, and cysteine 1067–cysteine 1093. In terms of domain architecture, CUB 6 spans 1067–1177 (CGGDVRGPSG…EGFNITFSEY (111 aa)). 3 N-linked (GlcNAc...) asparagine glycosylation sites follow: asparagine 1092, asparagine 1126, and asparagine 1171. Residues 1180–1239 (EPCEDPGIPQYGSRVGFSFGVGDTLTFSCSLGYRLEGSSEIICLGGGRRVWSAPLPRCVA) enclose the Sushi 6 domain. 3 disulfides stabilise this stretch: cysteine 1182/cysteine 1222, cysteine 1208/cysteine 1237, and cysteine 1241/cysteine 1267. The CUB 7 domain occupies 1241–1349 (CGASATNNEG…EGFQLVYTSF (109 aa)). Residue asparagine 1280 is glycosylated (N-linked (GlcNAc...) asparagine). The Sushi 7 domain maps to 1352-1412 (SHCEDPGIPQ…WDYPLPSCIA (61 aa)). Cystine bridges form between cysteine 1354–cysteine 1395, cysteine 1381–cysteine 1410, cysteine 1414–cysteine 1441, cysteine 1528–cysteine 1568, cysteine 1554–cysteine 1584, cysteine 1588–cysteine 1614, cysteine 1701–cysteine 1741, cysteine 1727–cysteine 1758, cysteine 1762–cysteine 1788, cysteine 1878–cysteine 1918, cysteine 1904–cysteine 1935, and cysteine 1939–cysteine 1965. The CUB 8 domain maps to 1414–1523 (CGGRFKGESS…SGFAIQFSSS (110 aa)). Positions 1526–1586 (TACRDPGVPM…WQPSPPVCIA (61 aa)) constitute a Sushi 8 domain. Asparagine 1536 carries an N-linked (GlcNAc...) asparagine glycan. Residues 1588-1696 (CGGNLTGSSG…TGFHLEYKAK (109 aa)) enclose the CUB 9 domain. N-linked (GlcNAc...) asparagine glycans are attached at residues asparagine 1591 and asparagine 1709. A Sushi 9 domain is found at 1699–1760 (ESCFDPGNIM…WNRVLPSCHA (62 aa)). In terms of domain architecture, CUB 10 spans 1762–1870 (CGSRSTGSEG…KGFHFVYQAV (109 aa)). Asparagine 1781 is a glycosylation site (N-linked (GlcNAc...) asparagine). Residues 1876–1937 (TQCSSVPEPR…WNDSLPTCIV (62 aa)) form the Sushi 10 domain. Asparagine 1929 carries an N-linked (GlcNAc...) asparagine glycan. The region spanning 1939–2047 (CGGILTKRKG…AGFHLEYTAI (109 aa)) is the CUB 11 domain. A glycan (N-linked (GlcNAc...) asparagine) is linked at asparagine 2019. Residues 2050-2109 (DSCPEPQTPSSGIKVGDRYMVGDVVSFQCDQGYSLQGHSHITCMPGPVRRWNYPIPICLA) enclose the Sushi 11 domain. Disulfide bonds link cysteine 2052–cysteine 2092, cysteine 2078–cysteine 2107, and cysteine 2111–cysteine 2137. In terms of domain architecture, CUB 12 spans 2111 to 2219 (CGGAMSDFSG…QGFHIVYQAY (109 aa)). The N-linked (GlcNAc...) asparagine glycan is linked to asparagine 2155. The Sushi 12 domain occupies 2222–2281 (QSCPDPRPFRNGFVIGNDFTVGQTISFECFPGYTLIGNSALTCLHGVSRNWNHPLPRCEA). 36 disulfides stabilise this stretch: cysteine 2224-cysteine 2264, cysteine 2250-cysteine 2279, cysteine 2283-cysteine 2309, cysteine 2395-cysteine 2437, cysteine 2423-cysteine 2452, cysteine 2456-cysteine 2484, cysteine 2569-cysteine 2610, cysteine 2596-cysteine 2627, cysteine 2632-cysteine 2674, cysteine 2658-cysteine 2689, cysteine 2694-cysteine 2739, cysteine 2725-cysteine 2754, cysteine 2759-cysteine 2799, cysteine 2785-cysteine 2812, cysteine 2817-cysteine 2857, cysteine 2843-cysteine 2870, cysteine 2875-cysteine 2915, cysteine 2901-cysteine 2928, cysteine 2933-cysteine 2977, cysteine 2963-cysteine 2990, cysteine 2995-cysteine 3035, cysteine 3021-cysteine 3048, cysteine 3056-cysteine 3096, cysteine 3082-cysteine 3109, cysteine 3114-cysteine 3155, cysteine 3141-cysteine 3168, cysteine 3173-cysteine 3215, cysteine 3199-cysteine 3228, cysteine 3233-cysteine 3273, cysteine 3259-cysteine 3286, cysteine 3291-cysteine 3331, cysteine 3317-cysteine 3344, cysteine 3352-cysteine 3393, cysteine 3379-cysteine 3406, cysteine 3411-cysteine 3453, and cysteine 3438-cysteine 3466. A CUB 13 domain is found at 2283-2394 (CGGNITAMNG…LSYHAYQLRV (112 aa)). 2 N-linked (GlcNAc...) asparagine glycosylation sites follow: asparagine 2286 and asparagine 2291. In terms of domain architecture, Sushi 13 spans 2393–2454 (RVCQPPPPVP…MDGAPPVCQV (62 aa)). Residues 2456–2567 (CPANELRLDS…KGFRIRYIAF (112 aa)) form the CUB 14 domain. 15 Sushi domains span residues 2567–2629 (FYCS…ACQA), 2630–2691 (ISCG…RCVV), 2692–2756 (VTCP…YCQI), 2757–2814 (ISCG…RCLA), 2815–2872 (GHCG…SCVP), 2873–2930 (VSCG…VCKV), 2931–2992 (VNCS…ECIM), 2993–3050 (IDCG…HCSG), 3054–3111 (GTCG…ECKA), 3112–3170 (VQCG…NCTI), 3171–3230 (ISCG…TCRA), 3231–3288 (VTCS…QCLP), 3289–3346 (KFCG…HCIE), 3350–3408 (TSCE…ECIP), and 3409–3468 (HSCK…VCEA). The span at 3052–3065 (TTGTCGDPGTPGHG) shows a compositional bias: low complexity. Residues 3052 to 3071 (TTGTCGDPGTPGHGSRQESD) are disordered. The chain crosses the membrane as a helical span at residues 3631-3651 (VAIAILVPFFALIFAGFGFYL). Residues 3652–3707 (YKQRTAPKTQYTGCSVHENNNGQAAFENPMYDTNAKSVEGKAVRFDPNLNTVCTMV) lie on the Cytoplasmic side of the membrane.

Belongs to the CSMD family. In terms of tissue distribution, expressed in the apical dendrites of postnatal hippocampal neurons (at protein level).

It is found in the cell membrane. In terms of biological role, involved in dendrite development. The sequence is that of CUB and sushi domain-containing protein 3 (Csmd3) from Mus musculus (Mouse).